Consider the following 442-residue polypeptide: U11/U12 small nuclear ribonucleoprotein 65 kDa protein (442 aa).

The RRM 1 domain occupies 28-102; that stretch reads VTLLVRHLPD…KVLQVQRANK (75 aa). 3 disordered regions span residues 101–138, 200–242, and 290–317; these read NKPN…QILS, LALP…GRKR, and SKVT…DSNL. The span at 102 to 116 shows a compositional bias: basic and acidic residues; that stretch reads KPNDNKKSRQIEESV. Polar residues predominate over residues 117 to 136; that stretch reads TKGNAFSTVSTNNDSKSGQI. A compositionally biased stretch (pro residues) spans 200 to 209; sequence LALPTPPLPK. The span at 297–307 shows a compositional bias: acidic residues; sequence YKEESENEDPA. Residues 352–434 enclose the RRM 2 domain; that stretch reads VVLYIKNLAK…KPMIIQFGRT (83 aa).

Component of the U11/U12 snRNPs that are part of the U12-type spliceosome. Forms a complex with U12 snRNA. In terms of tissue distribution, ubiquitous.

The protein localises to the nucleus. In terms of biological role, component of minor spliceosome required for U12-type intron splicing and alternative splicing of many introns. Binds specifically to U12 snRNA, which is necessary for branch-point site recognition. Required for normal plant development. The protein is U11/U12 small nuclear ribonucleoprotein 65 kDa protein (SNRNP65) of Arabidopsis thaliana (Mouse-ear cress).